The chain runs to 967 residues: Serine/threonine-protein kinase 10 (967 aa).

Phosphoserine is present on residues Ser-13 and Ser-20. One can recognise a Protein kinase domain in the interval 36-294 (WEILGELGDG…AAQLLQHPFV (259 aa)). ATP contacts are provided by residues 42-50 (LGDGAFGKV) and Lys-65. Residue Asp-157 is the Proton acceptor of the active site. Positions 175–224 (DFGVSAKNLKTLQKRDSFIGTPYWMAPEVVLCETMKDAPYDYKADIWSLG) are activation segment. The residue at position 185 (Thr-185) is a Phosphothreonine; by autocatalysis. At Ser-191 the chain carries Phosphoserine; by autocatalysis. 2 disordered regions span residues 317–454 (EIED…RPNS) and 468–498 (GGLE…SMDY). 3 stretches are compositionally biased toward polar residues: residues 339–364 (NHTQ…DSST), 378–393 (PCNQ…NTSP), and 431–454 (TDQA…RPNS). Phosphoserine occurs at positions 438, 450, 454, and 485. The span at 486–498 (DCSNLSTSESMDY) shows a compositional bias: polar residues. Phosphoserine is present on residues Ser-514 and Ser-549. Disordered regions lie at residues 827–866 (INGA…ENQM) and 902–967 (LDES…GDAS). Composition is skewed to basic and acidic residues over residues 835 to 866 (EQRE…ENQM) and 902 to 947 (LDES…EAET). Thr-951 carries the post-translational modification Phosphothreonine.

It belongs to the protein kinase superfamily. STE Ser/Thr protein kinase family. STE20 subfamily. Homodimer; homodimerization is required for activation segment autophosphorylation. In terms of processing, autophosphorylates following homodimerization, leading to activation of the protein.

The protein resides in the cell membrane. It carries out the reaction L-seryl-[protein] + ATP = O-phospho-L-seryl-[protein] + ADP + H(+). The catalysed reaction is L-threonyl-[protein] + ATP = O-phospho-L-threonyl-[protein] + ADP + H(+). Inhibited by the pyrrole-indolinone inhibitor SU11274 (K00593): intercalates between the ATP-binding Lys-65 and alpha-C glutamate (Glu-81), resulting in a partial disordering of the lysine side chain. Also specifically inhibited by erlotinib. Slightly inhibited by gefitinib. Functionally, serine/threonine-protein kinase involved in regulation of lymphocyte migration. Phosphorylates MSN, and possibly PLK1. Involved in regulation of lymphocyte migration by mediating phosphorylation of ERM proteins such as MSN. Acts as a negative regulator of MAP3K1/MEKK1. May also act as a cell cycle regulator by acting as a polo kinase kinase: mediates phosphorylation of PLK1 in vitro; however such data require additional evidences in vivo. The protein is Serine/threonine-protein kinase 10 (Stk10) of Rattus norvegicus (Rat).